The primary structure comprises 54 residues: Large ribosomal subunit protein bL33A (54 aa).

Belongs to the bacterial ribosomal protein bL33 family.

The polypeptide is Large ribosomal subunit protein bL33A (Mycolicibacterium paratuberculosis (strain ATCC BAA-968 / K-10) (Mycobacterium paratuberculosis)).